The chain runs to 1463 residues: Alpha-agarase (1463 aa).

A signal peptide spans 1–27 (MITSSKKIVSAMLSTSLWIGVASAAYA). Positions 28–684 (ETTNVEAEGY…PSTLSESIFT (657 aa)) are excised as a propeptide. Disordered regions lie at residues 166 to 191 (VTPENPDNPDNPDNPDDGNTGQPGTP) and 512 to 549 (TDDIDQCANTPSGETANATGCSSSQEGGGTDPDTPQPG). The span at 518–536 (CANTPSGETANATGCSSSQ) shows a compositional bias: polar residues. One can recognise a PA14 domain in the interval 534 to 677 (SSQEGGGTDP…GGTNFVHPST (144 aa)). The region spanning 701-832 (IIVELESFVF…QWSGDRVRFT (132 aa)) is the CBM6 domain.

This sequence belongs to the glycosyl hydrolase 96 family. As to quaternary structure, monomer. The cofactor is Ca(2+).

It catalyses the reaction Endohydrolysis of 1,3-alpha-L-galactosidic linkages in agarose, yielding agarotetraose as the major product.. Its function is as follows. Alpha-agarase. Hydrolyzes agarose, agarohexaose, neoagarohexaose and porphyran. Hydrolysis of porphyran by this enzyme improves its antioxidant activity. Does not hydrolyze kappa-carrageenan, iota-carrageenen or lambda-carrageenan. The chain is Alpha-agarase from Thalassotalea agarivorans (Thalassomonas agarivorans).